A 289-amino-acid chain; its full sequence is Elongation factor Ts (289 aa).

The involved in Mg(2+) ion dislocation from EF-Tu stretch occupies residues 82 to 85 (TDFV).

It belongs to the EF-Ts family.

Its subcellular location is the cytoplasm. Associates with the EF-Tu.GDP complex and induces the exchange of GDP to GTP. It remains bound to the aminoacyl-tRNA.EF-Tu.GTP complex up to the GTP hydrolysis stage on the ribosome. The polypeptide is Elongation factor Ts (Marinobacter nauticus (strain ATCC 700491 / DSM 11845 / VT8) (Marinobacter aquaeolei)).